The sequence spans 313 residues: MAETFKHTTVLLDEAVNGLNIRSNGIYIDGTFGRGGHSRLILSHLGTDGQLLAIDRDPQAVSAASAIHDARFSIIHGPFSSLADYVAERGLVGRIDGILLDLGVSSPQLDDPERGFSFMRDGPLDMRMDPSRGVSAAEWLMNAEADDIAWVLKTFGEERFAKRIARAIVERNRVEPLTRTKALAELIAAACPIREKHKHPATRSFQAIRIYINSELDEIERALEGALQVLAPHGRLSVISFHSLEDRIVKRFIRQHSRGPQVPAGLPLTEAQLKSQGGRTLKAVGKMMPSESEVGENPRARSSVLRFAERLPA.

Residues 35–37 (GGH), D55, F79, D101, and Q108 each bind S-adenosyl-L-methionine.

The protein belongs to the methyltransferase superfamily. RsmH family.

The protein localises to the cytoplasm. The enzyme catalyses cytidine(1402) in 16S rRNA + S-adenosyl-L-methionine = N(4)-methylcytidine(1402) in 16S rRNA + S-adenosyl-L-homocysteine + H(+). Specifically methylates the N4 position of cytidine in position 1402 (C1402) of 16S rRNA. This is Ribosomal RNA small subunit methyltransferase H from Musicola paradisiaca (strain Ech703) (Dickeya paradisiaca).